The following is a 466-amino-acid chain: UDP-N-acetylmuramoylalanine--D-glutamate ligase (466 aa).

ATP is bound at residue 121–127 (GTNGKST).

This sequence belongs to the MurCDEF family.

It is found in the cytoplasm. It catalyses the reaction UDP-N-acetyl-alpha-D-muramoyl-L-alanine + D-glutamate + ATP = UDP-N-acetyl-alpha-D-muramoyl-L-alanyl-D-glutamate + ADP + phosphate + H(+). It participates in cell wall biogenesis; peptidoglycan biosynthesis. Cell wall formation. Catalyzes the addition of glutamate to the nucleotide precursor UDP-N-acetylmuramoyl-L-alanine (UMA). This is UDP-N-acetylmuramoylalanine--D-glutamate ligase from Bradyrhizobium diazoefficiens (strain JCM 10833 / BCRC 13528 / IAM 13628 / NBRC 14792 / USDA 110).